The sequence spans 387 residues: Chorismate synthase (387 aa).

NADP(+) is bound by residues arginine 39 and arginine 45. Residues 130 to 132, 251 to 252, glycine 295, 310 to 314, and arginine 336 contribute to the FMN site; these read RSS, NA, and KPIPT.

Belongs to the chorismate synthase family. As to quaternary structure, homotetramer. It depends on FMNH2 as a cofactor.

The enzyme catalyses 5-O-(1-carboxyvinyl)-3-phosphoshikimate = chorismate + phosphate. The protein operates within metabolic intermediate biosynthesis; chorismate biosynthesis; chorismate from D-erythrose 4-phosphate and phosphoenolpyruvate: step 7/7. Its function is as follows. Catalyzes the anti-1,4-elimination of the C-3 phosphate and the C-6 proR hydrogen from 5-enolpyruvylshikimate-3-phosphate (EPSP) to yield chorismate, which is the branch point compound that serves as the starting substrate for the three terminal pathways of aromatic amino acid biosynthesis. This reaction introduces a second double bond into the aromatic ring system. The chain is Chorismate synthase from Exiguobacterium sp. (strain ATCC BAA-1283 / AT1b).